Consider the following 87-residue polypeptide: Protein L (87 aa).

In terms of biological role, this protein inhibits the multiplication of double-stranded DNA phages, such as P1 and lambda. The protein is Protein L (L) of Escherichia coli.